We begin with the raw amino-acid sequence, 312 residues long: Mas-related G-protein coupled receptor member E (312 aa).

Residues 1-20 (MMEPREAGQHVGAANGAQED) are Extracellular-facing. The helical transmembrane segment at 21 to 41 (VAFNLIILSLTEGLGLGGLLG) threads the bilayer. Residues 42–59 (NGAVLWLLSSNVYRNPFA) lie on the Cytoplasmic side of the membrane. The helical transmembrane segment at 60-80 (IYLLDVACADLIFLGCHMVAI) threads the bilayer. Topologically, residues 81–106 (VPDLLQGRLDFPGFVQTSLATLRFFC) are extracellular. Residues 107-127 (YIVGLSLLAAVSVEQCLAALF) form a helical membrane-spanning segment. Residues 128 to 141 (PAWYSCRRPRHLTT) are Cytoplasmic-facing. The chain crosses the membrane as a helical span at residues 142–162 (CVCALTWALCLLLHLLLSGAC). The Extracellular portion of the chain corresponds to 163 to 176 (TQFFGEPSRHLCRT). A helical membrane pass occupies residues 177–197 (LWLVAAVLLALLCCTMCGASL). Residues 198–217 (MLLLRVERGPQRPPPRGFPG) lie on the Cytoplasmic side of the membrane. The chain crosses the membrane as a helical span at residues 218–238 (LILLTVLLFLFCGLPFGIYWL). The Extracellular segment spans residues 239-241 (SRN). A helical membrane pass occupies residues 242–262 (LLWYIPHYFYHFSFLMAAVHC). Residues 263–312 (AAKPVVYFCLGSAQGRRLPLRLVLQRALGDEAELGAVRETSRRGLVDIAA) are Cytoplasmic-facing.

The protein belongs to the G-protein coupled receptor 1 family. Mas subfamily.

It localises to the cell membrane. Functionally, orphan receptor. May regulate nociceptor function and/or development, including the sensation or modulation of pain. This is Mas-related G-protein coupled receptor member E (MRGPRE) from Homo sapiens (Human).